The following is an 868-amino-acid chain: Sporulation-specific protein 75 (868 aa).

Over 1–34 the chain is Extracellular; it reads MNATKELTFNLLNKFQDKERFGSAQRHAGISLKG. Asn2 carries an N-linked (GlcNAc...) asparagine glycan. A helical membrane pass occupies residues 35-55; the sequence is FISGILFSFLYFLFQLSLFII. The Cytoplasmic segment spans residues 56–127; sequence LRSRFKTIYQ…DNYLFLRFLK (72 aa). The chain crosses the membrane as a helical span at residues 128–148; the sequence is LLIFFFAVLSIINIPILIPIH. Over 149–187 the chain is Extracellular; sequence YFSRDILKENEGERYEQSFRTTSKLDKWTMSNLSPNSSN. The N-linked (GlcNAc...) asparagine glycan is linked to Asn184. A helical membrane pass occupies residues 188 to 208; sequence TLICHLFLSIFVVLWFHFILS. The Cytoplasmic segment spans residues 209-481; the sequence is SELRFVNRLG…AKYFSANILR (273 aa). A helical transmembrane segment spans residues 482–502; the sequence is IFVIIGWILPVAFLGLISQIP. N-linked (GlcNAc...) asparagine glycosylation is present at Asn503. At 503–527 the chain is on the extracellular side; it reads NISSLIPFTKIIHFQSPFIREVAKN. Residues 528-548 traverse the membrane as a helical segment; that stretch reads LIPIVTLIIIIEIVPYFFRWL. Residues 549-569 are Cytoplasmic-facing; sequence SYLRGLKTGAQIEADVQNWYF. The helical transmembrane segment at 570–590 threads the bilayer; sequence VFVFIHLFVVVTISSGFSIII. Residues 591 to 611 lie on the Extracellular side of the membrane; sequence ERLLNNPVSIPALLANDLPKC. Residues 612-632 form a helical membrane-spanning segment; that stretch reads ANFFCSFVLIRGMAYAGGNLL. Residues 633–660 are Cytoplasmic-facing; the sequence is RIKELLFELFYYKWKRSTPHAQFKRLKT. Residues 661–683 traverse the membrane as a helical segment; that stretch reads SLFFQLGSIYPIFSVLGCIGIIY. Residues 684 to 692 lie on the Extracellular side of the membrane; sequence SVVAPIILL. The helical transmembrane segment at 693 to 713 threads the bilayer; sequence LCCISFSMVFFSFSYLFKYQY. The Cytoplasmic portion of the chain corresponds to 714–730; it reads NKENYSETFGKLYIQAL. Residues 731 to 751 form a helical membrane-spanning segment; that stretch reads MQLYAGIYFMEFCLLGLFTLF. Topologically, residues 752–753 are extracellular; that stretch reads DQ. A helical transmembrane segment spans residues 754–774; it reads YTLSTIMLVVFALTVITHSKI. At 775–868 the chain is on the cytoplasmic side; the sequence is SKQIKSKPQR…DCHLENSHLH (94 aa).

It belongs to the CSC1 (TC 1.A.17) family.

The protein localises to the membrane. Its function is as follows. Acts as an osmosensitive calcium-permeable cation channel. Required for spore wall assembly and ascus formation. This chain is Sporulation-specific protein 75 (SPO75), found in Saccharomyces cerevisiae (strain ATCC 204508 / S288c) (Baker's yeast).